Reading from the N-terminus, the 55-residue chain is Large ribosomal subunit protein bL33 (55 aa).

It belongs to the bacterial ribosomal protein bL33 family.

The chain is Large ribosomal subunit protein bL33 from Vibrio cholerae serotype O1 (strain ATCC 39541 / Classical Ogawa 395 / O395).